A 615-amino-acid polypeptide reads, in one-letter code: MAVLPLSGAIRLSRGDLVIETQTQDPWAKKLITQGTDKACADLDVQQIQALKMKCAMIMFAQYVQGNTFGQVVKMAEAVTDLAKKCTEVDRDNPNCRKPLDWIFLNTICQEDNLPRFTDCCAKKDPERNDCFLSLKNSSRGFISPFERPNAEAACKNYSEHRHSLPGYFIYEVSRRHPFLYAPTILSVAIHYDEMMKDCCRSAEDSTHNLEECFRRQAPKVVKPIREDGLRQEHTCGILKKFGERTIKALKLVQISQRFPKADFFTVTKLVSDIANMHKDCCRGDMLECMRDREEILHYVCTNQDVISSKIKKCCEKPLLQRSECIVNAENDDKPANLSPQVREFIEDKGICERFAQEKDTHLARFLYEYSRRHPEFSAQMLLRIGKGYEDLLDECCKTGSPDNCCSRGEEELKKHIYETESVMKTSCDIYKEKGDYYFQNEYIKFTKQMTTIGSKCCQLSQDKLLPCAEENVSLLVDLVLGEICRRHLTNPINPAVCHCCSSSYALRRPCMGKLEIDENYVPLSLTPDLFTFHEDLCTTEEEKLQHRKQEFGIPLLLSYPMLINLIKYKPQITQEQLTSITVAFTAMREQCCKEENREACFAKEVLVTLSPICS.

Residues 1–15 (MAVLPLSGAIRLSRG) form the signal peptide. The Cell attachment site signature appears at 14–16 (RGD). 3 Albumin domains span residues 27–218 (WAKK…RRQA), 223–415 (KPIR…ELKK), and 416–609 (HIYE…VLVT). 2 disulfides stabilise this stretch: C109-C121 and C120-C131. 2 N-linked (GlcNAc...) asparagine glycosylation sites follow: N137 and N157. Cystine bridges form between C155-C200, C199-C213, C236-C282, C281-C289, C301-C315, C314-C325, C396-C405, C428-C458, and C457-C468. The Cell attachment site signature appears at 283 to 285 (RGD). N-linked (GlcNAc...) asparagine glycosylation occurs at N472. 4 disulfide bridges follow: C485–C501, C500–C511, C538–C593, and C592–C601.

The protein belongs to the ALB/AFP/VDB family. Dimeric and trimeric forms have been found in addition to the monomeric form. In terms of processing, sulfated.

It localises to the secreted. Functionally, binds copper, nickel, and fatty acids as well as, and bilirubin less well than, serum albumin. The protein is Alpha-fetoprotein (AFP) of Gallus gallus (Chicken).